A 248-amino-acid polypeptide reads, in one-letter code: Ubiquinone/menaquinone biosynthesis C-methyltransferase UbiE (248 aa).

S-adenosyl-L-methionine-binding positions include Thr71, Asp92, and 120–121 (DA).

Belongs to the class I-like SAM-binding methyltransferase superfamily. MenG/UbiE family.

The catalysed reaction is a 2-demethylmenaquinol + S-adenosyl-L-methionine = a menaquinol + S-adenosyl-L-homocysteine + H(+). It carries out the reaction a 2-methoxy-6-(all-trans-polyprenyl)benzene-1,4-diol + S-adenosyl-L-methionine = a 5-methoxy-2-methyl-3-(all-trans-polyprenyl)benzene-1,4-diol + S-adenosyl-L-homocysteine + H(+). It functions in the pathway quinol/quinone metabolism; menaquinone biosynthesis; menaquinol from 1,4-dihydroxy-2-naphthoate: step 2/2. Its pathway is cofactor biosynthesis; ubiquinone biosynthesis. Methyltransferase required for the conversion of demethylmenaquinol (DMKH2) to menaquinol (MKH2) and the conversion of 2-polyprenyl-6-methoxy-1,4-benzoquinol (DDMQH2) to 2-polyprenyl-3-methyl-6-methoxy-1,4-benzoquinol (DMQH2). This Methylococcus capsulatus (strain ATCC 33009 / NCIMB 11132 / Bath) protein is Ubiquinone/menaquinone biosynthesis C-methyltransferase UbiE.